Reading from the N-terminus, the 461-residue chain is Fumarate hydratase class II (461 aa).

Residues 97–99 (SGT), 127–130 (HPND), 137–139 (SSN), and threonine 185 each bind substrate. The active-site Proton donor/acceptor is histidine 186. Serine 316 is an active-site residue. Substrate contacts are provided by residues serine 317 and 322–324 (KVN).

It belongs to the class-II fumarase/aspartase family. Fumarase subfamily. In terms of assembly, homotetramer.

It localises to the cytoplasm. It carries out the reaction (S)-malate = fumarate + H2O. Its pathway is carbohydrate metabolism; tricarboxylic acid cycle; (S)-malate from fumarate: step 1/1. Involved in the TCA cycle. Catalyzes the stereospecific interconversion of fumarate to L-malate. The sequence is that of Fumarate hydratase class II from Staphylococcus haemolyticus (strain JCSC1435).